Consider the following 239-residue polypeptide: Ribose-5-phosphate isomerase A (239 aa).

Substrate-binding positions include 39–42 (SGST), 95–98 (DGAD), and 108–111 (KGGG). Glu-117 functions as the Proton acceptor in the catalytic mechanism. Lys-135 is a substrate binding site.

Belongs to the ribose 5-phosphate isomerase family. In terms of assembly, homodimer.

The catalysed reaction is aldehydo-D-ribose 5-phosphate = D-ribulose 5-phosphate. It participates in carbohydrate degradation; pentose phosphate pathway; D-ribose 5-phosphate from D-ribulose 5-phosphate (non-oxidative stage): step 1/1. Catalyzes the reversible conversion of ribose-5-phosphate to ribulose 5-phosphate. The chain is Ribose-5-phosphate isomerase A from Chlamydia muridarum (strain MoPn / Nigg).